Reading from the N-terminus, the 324-residue chain is tRNA-modifying protein YgfZ (324 aa).

Trp184 is a binding site for folate.

Belongs to the tRNA-modifying YgfZ family.

It localises to the cytoplasm. In terms of biological role, folate-binding protein involved in regulating the level of ATP-DnaA and in the modification of some tRNAs. It is probably a key factor in regulatory networks that act via tRNA modification, such as initiation of chromosomal replication. This chain is tRNA-modifying protein YgfZ, found in Vibrio vulnificus (strain CMCP6).